The chain runs to 180 residues: Adenine phosphoribosyltransferase (180 aa).

This sequence belongs to the purine/pyrimidine phosphoribosyltransferase family. Homodimer.

The protein resides in the cytoplasm. The catalysed reaction is AMP + diphosphate = 5-phospho-alpha-D-ribose 1-diphosphate + adenine. Its pathway is purine metabolism; AMP biosynthesis via salvage pathway; AMP from adenine: step 1/1. Its function is as follows. Catalyzes a salvage reaction resulting in the formation of AMP, that is energically less costly than de novo synthesis. The sequence is that of Adenine phosphoribosyltransferase from Mycolicibacterium smegmatis (strain ATCC 700084 / mc(2)155) (Mycobacterium smegmatis).